Reading from the N-terminus, the 139-residue chain is D-ribose pyranase (139 aa).

The Proton donor role is filled by His20. Residues Asp28, His106, and 128 to 130 (YAN) each bind substrate.

This sequence belongs to the RbsD / FucU family. RbsD subfamily. As to quaternary structure, homodecamer.

It localises to the cytoplasm. The catalysed reaction is beta-D-ribopyranose = beta-D-ribofuranose. The protein operates within carbohydrate metabolism; D-ribose degradation; D-ribose 5-phosphate from beta-D-ribopyranose: step 1/2. Functionally, catalyzes the interconversion of beta-pyran and beta-furan forms of D-ribose. The polypeptide is D-ribose pyranase (Vibrio parahaemolyticus serotype O3:K6 (strain RIMD 2210633)).